The primary structure comprises 551 residues: Membrane protein insertase YidC (551 aa).

Residues 3 to 23 (ANHIRILLLVTIAIMFISLMG) form a helical membrane-spanning segment. The segment at 33-55 (NTKQQTSATQNNSHYDNADSSTN) is disordered. Helical transmembrane passes span 361 to 381 (LVGNWGLAIILVTCLIKLIFY), 431 to 451 (LSGCLPMLIQIPIFISLYWVL), and 504 to 524 (VMMFLPVIFTFLFASFPSGLV).

Belongs to the OXA1/ALB3/YidC family. Type 1 subfamily. Interacts with the Sec translocase complex via SecD. Specifically interacts with transmembrane segments of nascent integral membrane proteins during membrane integration.

It localises to the cell inner membrane. Functionally, required for the insertion and/or proper folding and/or complex formation of integral membrane proteins into the membrane. Involved in integration of membrane proteins that insert both dependently and independently of the Sec translocase complex, as well as at least some lipoproteins. Aids folding of multispanning membrane proteins. This Francisella tularensis subsp. holarctica (strain OSU18) protein is Membrane protein insertase YidC.